Reading from the N-terminus, the 210-residue chain is Inner membrane-spanning protein YciB (210 aa).

6 consecutive transmembrane segments (helical) span residues 12 to 32, 53 to 73, 78 to 98, 115 to 135, 148 to 168, and 175 to 195; these read EVSP…FFFA, IFIA…ASWI, LPMM…LTLW, LFGA…GYVF, KLTI…EVIW, and FWVA…TLAQ.

Belongs to the YciB family.

The protein resides in the cell inner membrane. Its function is as follows. Plays a role in cell envelope biogenesis, maintenance of cell envelope integrity and membrane homeostasis. This is Inner membrane-spanning protein YciB from Rhizobium meliloti (strain 1021) (Ensifer meliloti).